A 590-amino-acid polypeptide reads, in one-letter code: Aspartate--tRNA(Asp/Asn) ligase (590 aa).

Glu176 serves as a coordination point for L-aspartate. Positions 200–203 (QLFK) are aspartate. Arg222 and His451 together coordinate L-aspartate. Residue 222–224 (RDE) participates in ATP binding. Glu485 contributes to the ATP binding site. Arg492 lines the L-aspartate pocket. 537–540 (GIDR) is an ATP binding site.

The protein belongs to the class-II aminoacyl-tRNA synthetase family. Type 1 subfamily. Homodimer.

It is found in the cytoplasm. It carries out the reaction tRNA(Asx) + L-aspartate + ATP = L-aspartyl-tRNA(Asx) + AMP + diphosphate. Aspartyl-tRNA synthetase with relaxed tRNA specificity since it is able to aspartylate not only its cognate tRNA(Asp) but also tRNA(Asn). Reaction proceeds in two steps: L-aspartate is first activated by ATP to form Asp-AMP and then transferred to the acceptor end of tRNA(Asp/Asn). The protein is Aspartate--tRNA(Asp/Asn) ligase of Ehrlichia ruminantium (strain Welgevonden).